Consider the following 203-residue polypeptide: Small ribosomal subunit protein uS2 (203 aa).

This sequence belongs to the universal ribosomal protein uS2 family.

This Methanoregula boonei (strain DSM 21154 / JCM 14090 / 6A8) protein is Small ribosomal subunit protein uS2.